A 497-amino-acid polypeptide reads, in one-letter code: Guanosine-5'-triphosphate,3'-diphosphate pyrophosphatase (497 aa).

The protein belongs to the GppA/Ppx family. GppA subfamily.

The catalysed reaction is guanosine 3'-diphosphate 5'-triphosphate + H2O = guanosine 3',5'-bis(diphosphate) + phosphate + H(+). Its pathway is purine metabolism; ppGpp biosynthesis; ppGpp from GTP: step 2/2. In terms of biological role, catalyzes the conversion of pppGpp to ppGpp. Guanosine pentaphosphate (pppGpp) is a cytoplasmic signaling molecule which together with ppGpp controls the 'stringent response', an adaptive process that allows bacteria to respond to amino acid starvation, resulting in the coordinated regulation of numerous cellular activities. This Vibrio vulnificus (strain YJ016) protein is Guanosine-5'-triphosphate,3'-diphosphate pyrophosphatase.